A 491-amino-acid polypeptide reads, in one-letter code: Nucleoside transporter 1.2 (491 aa).

Helical transmembrane passes span 27 to 47, 82 to 102, 109 to 129, 136 to 156, 173 to 193, and 209 to 229; these read FYVY…VNAV, YNLI…LSWF, VRLL…MVVP, AGAV…KSIF, STMM…QIIV, and KIYY…LILL. The span at 261 to 273 shows a compositional bias: basic and acidic residues; the sequence is HTDEHPTHDKEGR. 2 disordered regions span residues 261-280 and 290-309; these read HTDE…SGKE and AAAK…PHEV. Asn274 is a glycosylation site (N-linked (GlcNAc...) asparagine). Transmembrane regions (helical) follow at residues 333 to 353, 361 to 381, 395 to 415, 427 to 447, and 460 to 480; these read MFVA…GIAV, WFST…RFSP, WIIV…LLHS, VMEV…LVLG, and FVAG…GTVL.

It belongs to the SLC29A/ENT transporter (TC 2.A.57) family.

Its subcellular location is the membrane. The catalysed reaction is adenosine(in) + H(+)(in) = adenosine(out) + H(+)(out). It catalyses the reaction uridine(in) + H(+)(in) = uridine(out) + H(+)(out). Its function is as follows. Sodium-independent nucleoside:H(+) symporter; transports adenosine with high affinity and uridine with moderate affinity. Can transport cytidine and thymidine. The chain is Nucleoside transporter 1.2 from Leishmania donovani.